We begin with the raw amino-acid sequence, 158 residues long: 2-C-methyl-D-erythritol 2,4-cyclodiphosphate synthase (158 aa).

Residues aspartate 9 and histidine 11 each coordinate a divalent metal cation. 4-CDP-2-C-methyl-D-erythritol 2-phosphate-binding positions include 9–11 (DVH) and 35–36 (HS). Histidine 43 serves as a coordination point for a divalent metal cation. 4-CDP-2-C-methyl-D-erythritol 2-phosphate-binding positions include 57-59 (DIG), 62-66 (FPDTD), 101-107 (AQKPKMA), 133-136 (TTTE), phenylalanine 140, and arginine 143.

This sequence belongs to the IspF family. Homotrimer. It depends on a divalent metal cation as a cofactor.

It catalyses the reaction 4-CDP-2-C-methyl-D-erythritol 2-phosphate = 2-C-methyl-D-erythritol 2,4-cyclic diphosphate + CMP. The protein operates within isoprenoid biosynthesis; isopentenyl diphosphate biosynthesis via DXP pathway; isopentenyl diphosphate from 1-deoxy-D-xylulose 5-phosphate: step 4/6. Its function is as follows. Involved in the biosynthesis of isopentenyl diphosphate (IPP) and dimethylallyl diphosphate (DMAPP), two major building blocks of isoprenoid compounds. Catalyzes the conversion of 4-diphosphocytidyl-2-C-methyl-D-erythritol 2-phosphate (CDP-ME2P) to 2-C-methyl-D-erythritol 2,4-cyclodiphosphate (ME-CPP) with a corresponding release of cytidine 5-monophosphate (CMP). This chain is 2-C-methyl-D-erythritol 2,4-cyclodiphosphate synthase, found in Bacillus cytotoxicus (strain DSM 22905 / CIP 110041 / 391-98 / NVH 391-98).